A 47-amino-acid polypeptide reads, in one-letter code: Protein YqgG (47 aa).

This Escherichia coli (strain K12) protein is Protein YqgG.